The sequence spans 363 residues: Probable matrix metalloproteinase 095L (363 aa).

Positions 1–25 are cleaved as a signal peptide; the sequence is MSVDSFTSRLAVVMTAVVLVWWAQA. Positions 26–126 are cleaved as a propeptide — activation peptide; that stretch reads LPVPSPRRGE…PRCGVPDVSK (101 aa). The short motif at 117–124 is the Cysteine switch element; sequence PRCGVPDV. Zn(2+)-binding residues include C119 and H275. Residue E276 is part of the active site. 2 residues coordinate Zn(2+): H279 and H285.

It belongs to the peptidase M10A family. Zn(2+) serves as cofactor.

The protein localises to the secreted. In terms of biological role, probable endopeptidase. The chain is Probable matrix metalloproteinase 095L from Aedes vexans (Inland floodwater mosquito).